The sequence spans 84 residues: Large ribosomal subunit protein uL23 (84 aa).

It belongs to the universal ribosomal protein uL23 family. As to quaternary structure, part of the 50S ribosomal subunit. Contacts protein L29.

Its function is as follows. Binds to 23S rRNA. One of the proteins that surrounds the polypeptide exit tunnel on the outside of the ribosome. This chain is Large ribosomal subunit protein uL23, found in Halobacterium salinarum (strain ATCC 700922 / JCM 11081 / NRC-1) (Halobacterium halobium).